The sequence spans 259 residues: Energy-coupling factor transporter ATP-binding protein EcfA1 (259 aa).

Positions 3 to 230 (ITLNSVSFRY…EFDDVEIPFK (228 aa)) constitute an ABC transporter domain. 38-43 (GSGKTT) contacts ATP. The active-site Proton acceptor is the E157.

This sequence belongs to the ABC transporter superfamily. Energy-coupling factor EcfA family. Forms a heterodimer with EcfA2. Forms a stable energy-coupling factor (ECF) transporter complex composed of 2 membrane-embedded substrate-binding proteins (S component, RibU, BioY), 2 ATP-binding proteins (A component) and 2 transmembrane proteins (T component) upon coexpression in E.coli. Stable subcomplexes with both A plus T components can also be isolated. This complex interacts with at least 2 substrate-specific components, BioY and RibU.

The protein localises to the cell inner membrane. Functionally, ATP-binding (A) component of a common energy-coupling factor (ECF) ABC-transporter complex. Unlike classic ABC transporters this ECF transporter provides the energy necessary to transport a number of different substrates. Expression of the complex plus RibU in E.coli allows riboflavin uptake; uptake does not occur in the absence of RibU or the EcfA1A2T complex. This chain is Energy-coupling factor transporter ATP-binding protein EcfA1, found in Thermotoga maritima (strain ATCC 43589 / DSM 3109 / JCM 10099 / NBRC 100826 / MSB8).